The chain runs to 319 residues: Ribonucleoside-diphosphate reductase small chain (319 aa).

Positions 313-319 (FSLDVDF) are interaction with R1.

It belongs to the ribonucleoside diphosphate reductase small chain family. As to quaternary structure, interacts with RNR1/OPG080 subunit. Can interact with host RNR1 supunit. Fe cation serves as cofactor.

It carries out the reaction a 2'-deoxyribonucleoside 5'-diphosphate + [thioredoxin]-disulfide + H2O = a ribonucleoside 5'-diphosphate + [thioredoxin]-dithiol. Functionally, ribonucleoside-diphosphate reductase holoenzyme provides the precursors necessary for viral DNA synthesis. Allows virus growth in non-dividing cells. Catalyzes the biosynthesis of deoxyribonucleotides from the corresponding ribonucleotides. The chain is Ribonucleoside-diphosphate reductase small chain (OPG048) from Cynomys gunnisoni (Gunnison's prairie dog).